The chain runs to 244 residues: Tetraspanin-2A (244 aa).

At 1 to 22 the chain is on the cytoplasmic side; sequence MGIGYGASDEQLEKQIGCVKYT. Residues 23 to 43 form a helical membrane-spanning segment; sequence LFCFNIVAWMISTALFALTVW. The Extracellular segment spans residues 44–61; sequence LRAEPGFNDWLRILEAQS. A helical transmembrane segment spans residues 62 to 82; the sequence is FYIGVYVLIGISIVMMAVSFL. Residues 83 to 91 are Cytoplasmic-facing; it reads GCLSALMEN. Residues 92 to 112 traverse the membrane as a helical segment; the sequence is TLALFVFVGTQVFGFIAIVAG. The Extracellular portion of the chain corresponds to 113–206; sequence SAVLLQFSTI…TWFFEGKTGW (94 aa). A helical transmembrane segment spans residues 207–227; it reads IVALAMTLGLLNVICAVMSFV. Residues 228-244 lie on the Cytoplasmic side of the membrane; it reads LVQAVKKEEEQASNYRR.

Belongs to the tetraspanin (TM4SF) family. As to quaternary structure, forms a complex with Ssk and mesh.

It localises to the apicolateral cell membrane. The protein localises to the cell junction. It is found in the septate junction. Its function is as follows. Required for assembly of smooth septate junctions (sSJs), together with Ssk and mesh. Important for barrier function of the midgut epithelium. The polypeptide is Tetraspanin-2A (Drosophila melanogaster (Fruit fly)).